Reading from the N-terminus, the 463-residue chain is ATP-dependent protease ATPase subunit HslU (463 aa).

Residues Ile19, 61–66 (GVGKTE), Asp277, Glu341, and Arg413 each bind ATP.

It belongs to the ClpX chaperone family. HslU subfamily. A double ring-shaped homohexamer of HslV is capped on each side by a ring-shaped HslU homohexamer. The assembly of the HslU/HslV complex is dependent on binding of ATP.

The protein resides in the cytoplasm. ATPase subunit of a proteasome-like degradation complex; this subunit has chaperone activity. The binding of ATP and its subsequent hydrolysis by HslU are essential for unfolding of protein substrates subsequently hydrolyzed by HslV. HslU recognizes the N-terminal part of its protein substrates and unfolds these before they are guided to HslV for hydrolysis. The polypeptide is ATP-dependent protease ATPase subunit HslU (Bacillus cereus (strain AH187)).